A 196-amino-acid polypeptide reads, in one-letter code: Pyridoxal 5'-phosphate synthase subunit PdxT (196 aa).

47–49 (GES) contributes to the L-glutamine binding site. The active-site Nucleophile is cysteine 79. L-glutamine contacts are provided by residues arginine 106 and 134–135 (IR). Catalysis depends on charge relay system residues histidine 170 and glutamate 172.

It belongs to the glutaminase PdxT/SNO family. As to quaternary structure, in the presence of PdxS, forms a dodecamer of heterodimers. Only shows activity in the heterodimer.

It catalyses the reaction aldehydo-D-ribose 5-phosphate + D-glyceraldehyde 3-phosphate + L-glutamine = pyridoxal 5'-phosphate + L-glutamate + phosphate + 3 H2O + H(+). It carries out the reaction L-glutamine + H2O = L-glutamate + NH4(+). Its pathway is cofactor biosynthesis; pyridoxal 5'-phosphate biosynthesis. Catalyzes the hydrolysis of glutamine to glutamate and ammonia as part of the biosynthesis of pyridoxal 5'-phosphate. The resulting ammonia molecule is channeled to the active site of PdxS. This Bacillus cereus (strain ZK / E33L) protein is Pyridoxal 5'-phosphate synthase subunit PdxT.